Reading from the N-terminus, the 173-residue chain is Adenine phosphoribosyltransferase (173 aa).

It belongs to the purine/pyrimidine phosphoribosyltransferase family. Homodimer.

Its subcellular location is the cytoplasm. It carries out the reaction AMP + diphosphate = 5-phospho-alpha-D-ribose 1-diphosphate + adenine. The protein operates within purine metabolism; AMP biosynthesis via salvage pathway; AMP from adenine: step 1/1. In terms of biological role, catalyzes a salvage reaction resulting in the formation of AMP, that is energically less costly than de novo synthesis. The polypeptide is Adenine phosphoribosyltransferase (Petrotoga mobilis (strain DSM 10674 / SJ95)).